A 62-amino-acid polypeptide reads, in one-letter code: Large ribosomal subunit protein uL29 (62 aa).

This sequence belongs to the universal ribosomal protein uL29 family.

This Geobacter sulfurreducens (strain ATCC 51573 / DSM 12127 / PCA) protein is Large ribosomal subunit protein uL29.